Here is a 290-residue protein sequence, read N- to C-terminus: MAVSASLVKELRERTGLGMMECKKALVETDGDIDVAIENLRKASGLKAAKKADRTAAEGVVAVKVAEDGSYGVMVEVNSETDFVARDAGFLAFVDTVVNKAFDTKATDVAALAGDEIESTRQALVQKIGENIGVRRVQLIEAGSGVVGAYLHSNNRIAVLTQLTAGDVELARDIAMHVAAVNPQVVNSADMPAEVVEKEKEIIKAQPDMEGKPAEIVDKMMVGRINKFLKENSLVDQPFVKNPEVTVGKLAKDAGAEVVGFVRFEVGEGIEKVEEDFAAEVAAQVAASKA.

The tract at residues 81-84 (TDFV) is involved in Mg(2+) ion dislocation from EF-Tu.

This sequence belongs to the EF-Ts family.

Its subcellular location is the cytoplasm. In terms of biological role, associates with the EF-Tu.GDP complex and induces the exchange of GDP to GTP. It remains bound to the aminoacyl-tRNA.EF-Tu.GTP complex up to the GTP hydrolysis stage on the ribosome. The chain is Elongation factor Ts from Saccharophagus degradans (strain 2-40 / ATCC 43961 / DSM 17024).